A 302-amino-acid polypeptide reads, in one-letter code: Oxygen-dependent coproporphyrinogen-III oxidase (302 aa).

Substrate is bound at residue Ser-94. A divalent metal cation contacts are provided by His-98 and His-108. His-108 (proton donor) is an active-site residue. 110–112 contacts substrate; sequence NVR. Positions 147 and 177 each coordinate a divalent metal cation. An important for dimerization region spans residues 242 to 277; the sequence is YVEFNLVYDRGTLFGLQTGGRTESILMSMPPLARWE. 260-262 lines the substrate pocket; it reads GGR.

This sequence belongs to the aerobic coproporphyrinogen-III oxidase family. In terms of assembly, homodimer. It depends on a divalent metal cation as a cofactor.

The protein resides in the cytoplasm. It carries out the reaction coproporphyrinogen III + O2 + 2 H(+) = protoporphyrinogen IX + 2 CO2 + 2 H2O. It functions in the pathway porphyrin-containing compound metabolism; protoporphyrin-IX biosynthesis; protoporphyrinogen-IX from coproporphyrinogen-III (O2 route): step 1/1. Its function is as follows. Involved in the heme biosynthesis. Catalyzes the aerobic oxidative decarboxylation of propionate groups of rings A and B of coproporphyrinogen-III to yield the vinyl groups in protoporphyrinogen-IX. The sequence is that of Oxygen-dependent coproporphyrinogen-III oxidase from Aeromonas hydrophila subsp. hydrophila (strain ATCC 7966 / DSM 30187 / BCRC 13018 / CCUG 14551 / JCM 1027 / KCTC 2358 / NCIMB 9240 / NCTC 8049).